The chain runs to 391 residues: 23S rRNA (uracil(747)-C(5))-methyltransferase RlmC (391 aa).

[4Fe-4S] cluster-binding residues include Cys-5, Cys-13, Cys-16, and Cys-95. Positions 220, 249, 276, and 322 each coordinate S-adenosyl-L-methionine. Cys-349 (nucleophile) is an active-site residue.

The protein belongs to the class I-like SAM-binding methyltransferase superfamily. RNA M5U methyltransferase family. RlmC subfamily.

The enzyme catalyses uridine(747) in 23S rRNA + S-adenosyl-L-methionine = 5-methyluridine(747) in 23S rRNA + S-adenosyl-L-homocysteine + H(+). Functionally, catalyzes the formation of 5-methyl-uridine at position 747 (m5U747) in 23S rRNA. This is 23S rRNA (uracil(747)-C(5))-methyltransferase RlmC from Actinobacillus pleuropneumoniae serotype 3 (strain JL03).